The following is a 203-amino-acid chain: NADH-quinone oxidoreductase subunit C (203 aa).

Belongs to the complex I 30 kDa subunit family. In terms of assembly, NDH-1 is composed of 14 different subunits. Subunits NuoB, C, D, E, F, and G constitute the peripheral sector of the complex.

The protein localises to the cell inner membrane. The enzyme catalyses a quinone + NADH + 5 H(+)(in) = a quinol + NAD(+) + 4 H(+)(out). NDH-1 shuttles electrons from NADH, via FMN and iron-sulfur (Fe-S) centers, to quinones in the respiratory chain. The immediate electron acceptor for the enzyme in this species is believed to be ubiquinone. Couples the redox reaction to proton translocation (for every two electrons transferred, four hydrogen ions are translocated across the cytoplasmic membrane), and thus conserves the redox energy in a proton gradient. This Verminephrobacter eiseniae (strain EF01-2) protein is NADH-quinone oxidoreductase subunit C.